A 319-amino-acid chain; its full sequence is Coiled-coil domain-containing protein PF3D7_1144200 (319 aa).

Over residues 1 to 12 the composition is skewed to basic and acidic residues; the sequence is MSEEHSNDHIED. 2 disordered regions span residues 1–43 and 112–158; these read MSEE…SESS and KLEK…NQHN. Residues 16–26 show a composition bias toward polar residues; that stretch reads CSQNCDETNSP. Basic and acidic residues-rich tracts occupy residues 27–36 and 112–131; these read KNEKDEKDFK and KLEK…KKVT. Coiled-coil stretches lie at residues 100 to 134, 166 to 242, and 281 to 310; these read DLAN…TNDS, ELNE…IKKN, and NSNC…LINI. Positions 132–150 are enriched in low complexity; the sequence is NDSTNNKNKNNSVPFLNEN.

The polypeptide is Coiled-coil domain-containing protein PF3D7_1144200 (Plasmodium falciparum (isolate 3D7)).